The primary structure comprises 366 residues: MITLKTTPFHQAHQDAGAKLVDFAGWELPIHYGSQIAEHEAVRTDAGMFDVSHMLVTDVAGANAKAFFRKLIANDVAKLAFVGKALYSALLNDNGGVIDDLIVYRTNEAETQYRIVSNGATREKDTAQFHKVGQEFGVSFNPRYDLGMLAVQGPKAIEKLLTVKPEWADVVHNLKPFQGADLGNDWFVARTGYTGEDGVEVILPGTEAVAFFKALQAAGVQPCGLGARDTLRMEAGMNLYGNDMDDDTSPLEAGMGWTVDLKDESRDFVGKAALLALKEKGVAVKQVGLLLGKGGILRAHMEVLTDKGKGETTSGVFSPSLKQSIAIARVPKDFDGDTAKVLIRGKEADVRVLKLPFVRNGQKQFD.

This sequence belongs to the GcvT family. As to quaternary structure, the glycine cleavage system is composed of four proteins: P, T, L and H.

It catalyses the reaction N(6)-[(R)-S(8)-aminomethyldihydrolipoyl]-L-lysyl-[protein] + (6S)-5,6,7,8-tetrahydrofolate = N(6)-[(R)-dihydrolipoyl]-L-lysyl-[protein] + (6R)-5,10-methylene-5,6,7,8-tetrahydrofolate + NH4(+). Its function is as follows. The glycine cleavage system catalyzes the degradation of glycine. In Neisseria meningitidis serogroup A / serotype 4A (strain DSM 15465 / Z2491), this protein is Aminomethyltransferase.